We begin with the raw amino-acid sequence, 256 residues long: uncharacterized protein (256 aa).

A signal peptide spans M1–G24. Residue C25 is the site of N-palmitoyl cysteine attachment. C25 carries the S-diacylglycerol cysteine lipid modification.

It belongs to the staphylococcal tandem lipoprotein family.

It localises to the cell membrane. This is an uncharacterized protein from Staphylococcus aureus (strain MW2).